Reading from the N-terminus, the 550-residue chain is Solute carrier family 22 member 6 (550 aa).

The Cytoplasmic segment spans residues 1-9; sequence MAFNDLLQQ. The chain crosses the membrane as a helical span at residues 10-30; the sequence is VGGVGRFQQIQVTLVVLPLLL. Over 31–135 the chain is Extracellular; it reads MASHNTLQNF…LVCSHRALRQ (105 aa). N-linked (GlcNAc...) asparagine glycosylation is found at Asn-39, Asn-92, and Asn-113. The helical transmembrane segment at 136–156 threads the bilayer; that stretch reads LAQSLYMVGVLLGAMVFGYLA. At 157 to 164 the chain is on the cytoplasmic side; the sequence is DRLGRRKV. Residues 165–187 form a helical membrane-spanning segment; sequence LILNYLQTAVSGTCTAFAPNFSI. Residues 188–195 are Extracellular-facing; that stretch reads YCAFRLLS. Residues 196–216 traverse the membrane as a helical segment; the sequence is GMSLAGISLNCMTLNVEWMPI. At 217–224 the chain is on the cytoplasmic side; the sequence is HTRACVGT. A helical membrane pass occupies residues 225–245; sequence LIGYVYSLGQFLLAGVAYAVP. The Extracellular portion of the chain corresponds to 246 to 248; it reads HWR. The chain crosses the membrane as a helical span at residues 249–269; that stretch reads HLQLLVSAPFFAFFIYSWFFI. Over 270-337 the chain is Cytoplasmic; that stretch reads ESARWHSSSG…ELLRCPTLRH (68 aa). Residues 338–358 form a helical membrane-spanning segment; sequence LFLCLSMLWFATSFAYYGLVM. The Extracellular segment spans residues 359-368; it reads DLQGFGVSIY. Residues 369–389 form a helical membrane-spanning segment; it reads LIQVIFGAVDLPAKLVGFLVI. Over 390 to 395 the chain is Cytoplasmic; sequence NSLGRR. The chain crosses the membrane as a helical span at residues 396 to 416; the sequence is PAQMAALLLAGICILLNGVIP. Residues 417 to 420 are Extracellular-facing; the sequence is QDQS. Residues 421-444 form a helical membrane-spanning segment; sequence IVRTSLAVPGKGCLAASFNCIFLY. The Cytoplasmic portion of the chain corresponds to 445-455; sequence TGELYPTMIRQ. A helical transmembrane segment spans residues 456-475; sequence TGMGMGSTMARVGSIVSPLV. Residues 476–484 are Extracellular-facing; it reads SMTAELYPS. Residues 485–505 traverse the membrane as a helical segment; sequence MPLFIYGAVPVAASAVTVLLP. The Cytoplasmic portion of the chain corresponds to 506–550; that stretch reads ETLGQPLPDTVQDLESRKGKQTRQQQEHQKYMVPLQASAQEKNGL. Positions 514 to 550 are disordered; that stretch reads DTVQDLESRKGKQTRQQQEHQKYMVPLQASAQEKNGL.

This sequence belongs to the major facilitator (TC 2.A.1) superfamily. Organic cation transporter (TC 2.A.1.19) family. In terms of processing, glycosylated. Glycosylation is necessary for proper targeting of the transporter to the plasma membrane.

The protein localises to the cell membrane. It carries out the reaction prostaglandin F2alpha(out) = prostaglandin F2alpha(in). The enzyme catalyses prostaglandin E2(out) = prostaglandin E2(in). Functionally, involved in the renal elimination of endogenous and exogenous organic anions. Functions as organic anion exchanger when the uptake of one molecule of organic anion is coupled with an efflux of one molecule of endogenous dicarboxylic acid (glutarate, ketoglutarate, etc). Mediates the transport of prostaglandin E2 (PGE2) and prostaglandin F2-alpha (PGF2-alpha) and may be involved in their renal excretion. Also mediates the sodium-independent uptake of p-aminohippurate (PAH), 2,3-dimercapto-1-propanesulfonic acid (DMPS), cidofovir, adefovir, 9-(2-phosphonylmethoxyethyl) guanine (PMEG), 9-(2-phosphonylmethoxyethyl) diaminopurine (PMEDAP), ochratoxin (OTA), acyclovir (ACV), 3'-azido-3-'deoxythymidine (AZT), cimetidine (CMD), 2,4-dichloro-phenoxyacetate (2,4-D), hippurate (HA), indoleacetate (IA), indoxyl sulfate (IS) and 3-carboxy-4-methyl-5-propyl-2-furanpropionate (CMPF) and edaravone sulfate. PAH uptake is inhibited by p-chloromercuribenzenesulphonate (PCMBS), diethyl pyrocarbonate (DEPC), indomethacin, sulindac, diclofenac, carprofen, okadaic acid, benzothiazolylcysteine (BTC), S-chlorotrifluoroethylcysteine (CTFC), cysteine S-conjugates S-dichlorovinylcysteine (DCVC), furosemide, steviol, phorbol 12-myristate 13-acetate (PMA), calcium ionophore A23187, benzylpenicillin, bumetamide, losartan, probenecid, phenol red, urate, glutarate and alpha-ketoglutarate. This is Solute carrier family 22 member 6 (SLC22A6) from Pongo abelii (Sumatran orangutan).